A 156-amino-acid polypeptide reads, in one-letter code: Ribosomal RNA large subunit methyltransferase H (156 aa).

Residues Leu73, Gly104, and 123 to 128 contribute to the S-adenosyl-L-methionine site; that span reads IGPLTL.

This sequence belongs to the RNA methyltransferase RlmH family. As to quaternary structure, homodimer.

The protein localises to the cytoplasm. It catalyses the reaction pseudouridine(1915) in 23S rRNA + S-adenosyl-L-methionine = N(3)-methylpseudouridine(1915) in 23S rRNA + S-adenosyl-L-homocysteine + H(+). Functionally, specifically methylates the pseudouridine at position 1915 (m3Psi1915) in 23S rRNA. In Xanthomonas oryzae pv. oryzae (strain MAFF 311018), this protein is Ribosomal RNA large subunit methyltransferase H.